The chain runs to 279 residues: Tryptophan 2,3-dioxygenase (279 aa).

Substrate is bound by residues Phe48–His52, Tyr110, and Arg114. His237 lines the heme pocket. Substrate is bound at residue Thr251.

The protein belongs to the tryptophan 2,3-dioxygenase family. As to quaternary structure, homotetramer. Heme is required as a cofactor.

It carries out the reaction L-tryptophan + O2 = N-formyl-L-kynurenine. It participates in amino-acid degradation; L-tryptophan degradation via kynurenine pathway; L-kynurenine from L-tryptophan: step 1/2. Heme-dependent dioxygenase that catalyzes the oxidative cleavage of the L-tryptophan (L-Trp) pyrrole ring and converts L-tryptophan to N-formyl-L-kynurenine. Catalyzes the oxidative cleavage of the indole moiety. The protein is Tryptophan 2,3-dioxygenase of Bacillus cereus (strain ZK / E33L).